A 224-amino-acid polypeptide reads, in one-letter code: Uridylate kinase (224 aa).

Residue 6-10 participates in ATP binding; the sequence is KVTGK. UMP is bound at residue G41. ATP contacts are provided by G42 and R46. Residues D63 and 111-117 contribute to the UMP site; that span reads FQPGQST. Residues T137, F143, and D146 each coordinate ATP.

The protein belongs to the UMP kinase family. Homohexamer.

It is found in the cytoplasm. It carries out the reaction UMP + ATP = UDP + ADP. The protein operates within pyrimidine metabolism; CTP biosynthesis via de novo pathway; UDP from UMP (UMPK route): step 1/1. With respect to regulation, inhibited by UTP. Catalyzes the reversible phosphorylation of UMP to UDP. The chain is Uridylate kinase from Metallosphaera sedula (strain ATCC 51363 / DSM 5348 / JCM 9185 / NBRC 15509 / TH2).